We begin with the raw amino-acid sequence, 471 residues long: 3-isopropylmalate dehydratase large subunit (471 aa).

Residues Cys-347, Cys-407, and Cys-410 each coordinate [4Fe-4S] cluster. The interval 417–443 is disordered; that stretch reads TLQPGERSASTSNRNFEGRQGKGGRTH.

The protein belongs to the aconitase/IPM isomerase family. LeuC type 1 subfamily. As to quaternary structure, heterodimer of LeuC and LeuD. [4Fe-4S] cluster is required as a cofactor.

The catalysed reaction is (2R,3S)-3-isopropylmalate = (2S)-2-isopropylmalate. Its pathway is amino-acid biosynthesis; L-leucine biosynthesis; L-leucine from 3-methyl-2-oxobutanoate: step 2/4. Catalyzes the isomerization between 2-isopropylmalate and 3-isopropylmalate, via the formation of 2-isopropylmaleate. The sequence is that of 3-isopropylmalate dehydratase large subunit from Nocardioides sp. (strain ATCC BAA-499 / JS614).